The sequence spans 372 residues: MKLLQTPLYQECKELGGKMVPFANWEMPVSFSGLIEEHNAVRKNVGMFDISHMGVVQLKGKNIKSALQNLVPSDVFRIGPSEACYTVFLKENGGIQDDLIIYDQGVLDTNEESIVLVINAARKESDIEWLSSNLFKKEITISEFMPEGALIAIQGPESISTLEKILEEPLSNLPRFGHRTITSNPNLINSQESIFIARTGYTGEEGFEFLSSPETAKSIWKSLIASGVTPCGLGARDTLRLEASMHLYGNDINLDTTPFEAGLGWLVHLEMPNDFIGRKALEKQAEVGTQKKLVGIQVLDKGIARKGYPVLYNSETVGIVTSGTWSPTLQKPIALAYVPSEIAKVNTQIEVEIRRKKHPAIIVKRPFYRKGF.

The protein belongs to the GcvT family. As to quaternary structure, the glycine cleavage system is composed of four proteins: P, T, L and H.

The catalysed reaction is N(6)-[(R)-S(8)-aminomethyldihydrolipoyl]-L-lysyl-[protein] + (6S)-5,6,7,8-tetrahydrofolate = N(6)-[(R)-dihydrolipoyl]-L-lysyl-[protein] + (6R)-5,10-methylene-5,6,7,8-tetrahydrofolate + NH4(+). The glycine cleavage system catalyzes the degradation of glycine. The protein is Aminomethyltransferase of Prochlorococcus marinus (strain NATL2A).